The sequence spans 567 residues: Phenylalanine--tRNA ligase beta subunit (567 aa).

Residues 287 to 362 (YFQEEVEFNV…IGEGLASFHP (76 aa)) form the B5 domain. Mg(2+)-binding residues include D340, D346, E349, and D350.

This sequence belongs to the phenylalanyl-tRNA synthetase beta subunit family. Type 2 subfamily. In terms of assembly, tetramer of two alpha and two beta subunits. Mg(2+) serves as cofactor.

It is found in the cytoplasm. The catalysed reaction is tRNA(Phe) + L-phenylalanine + ATP = L-phenylalanyl-tRNA(Phe) + AMP + diphosphate + H(+). The polypeptide is Phenylalanine--tRNA ligase beta subunit (Borreliella afzelii (strain PKo) (Borrelia afzelii)).